The sequence spans 124 residues: Small ribosomal subunit protein uS12 (124 aa).

D89 carries the 3-methylthioaspartic acid modification.

The protein belongs to the universal ribosomal protein uS12 family. In terms of assembly, part of the 30S ribosomal subunit. Contacts proteins S8 and S17. May interact with IF1 in the 30S initiation complex.

In terms of biological role, with S4 and S5 plays an important role in translational accuracy. Its function is as follows. Interacts with and stabilizes bases of the 16S rRNA that are involved in tRNA selection in the A site and with the mRNA backbone. Located at the interface of the 30S and 50S subunits, it traverses the body of the 30S subunit contacting proteins on the other side and probably holding the rRNA structure together. The combined cluster of proteins S8, S12 and S17 appears to hold together the shoulder and platform of the 30S subunit. The sequence is that of Small ribosomal subunit protein uS12 from Shewanella piezotolerans (strain WP3 / JCM 13877).